A 336-amino-acid chain; its full sequence is Cytoskeleton protein RodZ (336 aa).

Residues 1 to 111 (MNTEATHDKT…LGKRRKKRDG (111 aa)) are Cytoplasmic-facing. One can recognise an HTH cro/C1-type domain in the interval 19–71 (LRNAREQLGLSQQAVAERLCLKVSTVRDIEEDKAPADLASTFLRGYIRSYAKL). A DNA-binding region (H-T-H motif) is located at residues 30-49 (QQAVAERLCLKVSTVRDIEE). A helical; Signal-anchor for type II membrane protein membrane pass occupies residues 112–132 (WLMSFTWLVLFVVIGLTGAWW). The Periplasmic portion of the chain corresponds to 133-336 (WQNHKAQQEE…TVSAEQSAAQ (204 aa)). Residues 152–164 (AALNNSGNNGAQS) show a composition bias toward low complexity. Positions 152–235 (AALNNSGNNG…TTTGNVNVTQ (84 aa)) are disordered. Composition is skewed to polar residues over residues 165–190 (VPLN…TVEP) and 200–217 (PDQT…QANV). Over residues 220–235 (APAVTPTTTGNVNVTQ) the composition is skewed to low complexity.

Belongs to the RodZ family.

The protein localises to the cell inner membrane. Cytoskeletal protein that is involved in cell-shape control through regulation of the length of the long axis. The sequence is that of Cytoskeleton protein RodZ from Enterobacter sp. (strain 638).